The chain runs to 76 residues: Putative defensin-like protein 184 (76 aa).

Positions 1-21 (MKNSSILFVLIIVVFLISSSG) are cleaved as a signal peptide. Cystine bridges form between C32/C76, C38/C58, C44/C70, and C48/C72.

This sequence belongs to the DEFL family.

The protein localises to the secreted. This chain is Putative defensin-like protein 184 (LCR18), found in Arabidopsis thaliana (Mouse-ear cress).